The primary structure comprises 102 residues: Salivary protein Salp9 (102 aa).

A signal peptide spans 1-21 (MGLTEIMLVLVSLAFVATAAA). Asn-26 and Asn-87 each carry an N-linked (GlcNAc...) asparagine glycan. The segment at 83–102 (SGVPNDTDAKIEETEEELEA) is disordered.

This sequence belongs to the salp14 family. In terms of tissue distribution, salivary gland (at protein level). Saliva (at protein level). Midgut.

The protein localises to the secreted. Salivary protein that facilitates blood feeding of adult ticks on vertebrate species. Inhibits the lectin pathway of complement system activation in the host. This chain is Salivary protein Salp9, found in Ixodes scapularis (Black-legged tick).